The primary structure comprises 436 residues: D-amino acid dehydrogenase (436 aa).

FAD is bound at residue 3–17 (ILILGSGVIGVTSAW).

It belongs to the DadA oxidoreductase family. FAD is required as a cofactor.

The enzyme catalyses a D-alpha-amino acid + A + H2O = a 2-oxocarboxylate + AH2 + NH4(+). The protein operates within amino-acid degradation; D-alanine degradation; NH(3) and pyruvate from D-alanine: step 1/1. Its function is as follows. Oxidative deamination of D-amino acids. This Photorhabdus laumondii subsp. laumondii (strain DSM 15139 / CIP 105565 / TT01) (Photorhabdus luminescens subsp. laumondii) protein is D-amino acid dehydrogenase.